A 481-amino-acid polypeptide reads, in one-letter code: Vanillin dehydrogenase (481 aa).

NAD(+) is bound at residue Gly-228 to Gly-233. Residues Glu-250 and Cys-284 contribute to the active site.

It belongs to the aldehyde dehydrogenase family.

The enzyme catalyses vanillin + NAD(+) + H2O = vanillate + NADH + 2 H(+). Its function is as follows. Catalyzes the NAD-dependent oxidation of vanillin to vanillic acid. The chain is Vanillin dehydrogenase (vdh) from Pseudomonas sp. (strain HR199 / DSM 7063).